The sequence spans 197 residues: Transcription factor FapR (197 aa).

Belongs to the FapR family.

Functionally, transcriptional factor involved in regulation of membrane lipid biosynthesis by repressing genes involved in fatty acid and phospholipid metabolism. The protein is Transcription factor FapR of Bacillus cereus (strain B4264).